A 296-amino-acid chain; its full sequence is 1,2-beta-oligomannan phosphorylase (296 aa).

The protein belongs to the glycosyl hydrolase 130 family. Homodimer.

The enzyme catalyses [(1-&gt;2)-beta-D-mannosyl](n) + phosphate = [(1-&gt;2)-beta-D-mannosyl](n-1) + alpha-D-mannose 1-phosphate. Its pathway is nucleotide-sugar biosynthesis; GDP-alpha-D-mannose biosynthesis. In terms of biological role, probably involved in a salvage pathway for GDP-D-mannose biosynthesis. Catalyzes the reversible phosphorolysis of 1,2-beta-oligomannan. In phosphorolytic reactions, prefers 1,2-beta-oligomannan with a degree of polymerization (DP) of 3, 4 and 5. Produces alpha-D-mannose 1-phosphate, which is the precursor of GDP-D-mannose. The sequence is that of 1,2-beta-oligomannan phosphorylase from Thermoanaerobacter sp. (strain X514).